A 339-amino-acid chain; its full sequence is MIELFYEYMFPLTVIALKVVAITIPLILCVAYLTYAERRVIGLMQLRRGPNVVGPFGLLQPIADAVKLLFKEPIIPTNADKILFILAPIITFVLSLIGWAVIPFAKGVVLADINVGVLYILAISSLSVYGIIIAGWASNSKYAFLGAIRSSAQMISYEVSIGLVIVTVLLTTGTLNLSRIIEAQKTLPWWIDLMLLPMSIVFFISVLAETNRLPFDLPEAESELVAGYNVEYSSMGFALFFLGEYANMILVSAMTTTFFLGGYLPPFNLPFLDCIPGFFWFVLKVMLLLFCFLWIRATLPRYRYDQLMRLGWKVFLPLTLFGVVLVSSVLFYTDNLPSV.

Transmembrane regions (helical) follow at residues 10-30, 50-70, 82-102, 115-135, 155-175, 187-207, 235-255, 275-295, and 311-331; these read FPLT…ILCV, PNVV…KLLF, ILFI…WAVI, VGVL…IIAG, ISYE…TGTL, LPWW…ISVL, MGFA…SAMT, IPGF…FLWI, and GWKV…SVLF.

The protein belongs to the complex I subunit 1 family. In terms of assembly, NDH-1 is composed of 14 different subunits. Subunits NuoA, H, J, K, L, M, N constitute the membrane sector of the complex.

Its subcellular location is the cell inner membrane. The catalysed reaction is a quinone + NADH + 5 H(+)(in) = a quinol + NAD(+) + 4 H(+)(out). Its function is as follows. NDH-1 shuttles electrons from NADH, via FMN and iron-sulfur (Fe-S) centers, to quinones in the respiratory chain. The immediate electron acceptor for the enzyme in this species is believed to be ubiquinone. Couples the redox reaction to proton translocation (for every two electrons transferred, four hydrogen ions are translocated across the cytoplasmic membrane), and thus conserves the redox energy in a proton gradient. This subunit may bind ubiquinone. The chain is NADH-quinone oxidoreductase subunit H from Rickettsia typhi (strain ATCC VR-144 / Wilmington).